We begin with the raw amino-acid sequence, 211 residues long: Mitotic spindle assembly checkpoint protein MAD2B (211 aa).

Positions 13–203 constitute an HORMA domain; that stretch reads QVVADVLCEF…SDILKMQLYV (191 aa). The interval 21 to 155 is mediates interaction with REV1 and REV3L and homodimerization; the sequence is EFLEVAVHLI…FTVLVHTREA (135 aa). Positions 150–211 are mediates interaction with ipaB; it reads VHTREAATRN…YVEERAHKGS (62 aa).

Homooligomer. Heterodimer with REV3L. This dimer forms the minimal DNA polymerase zeta complex (Pol-zeta2), with REV3L bearing DNA polymerase catalytic activity, although its activity is very low in this context. Component of the tetrameric Pol-zeta complex (Pol-zeta4), which consists of REV3L, MAD2L2, POLD2 and POLD3; Pol-zeta4 is the fully active form of DNA polymerase zeta. Component of the shieldin complex, consisting of SHLD1, SHLD2, SHLD3 and MAD2L2/REV7. Within the complex, SHLD2 forms a scaffold which interacts with a SHLD3-MAD2L2 subcomplex via its N-terminus, and with SHLD1 via its C-terminus. Interacts with REV1. Interacts with ADAM9. Interacts with CHAMP1. Interacts with FZR1 (in complex with the anaphase promoting complex APC). Interacts with CDC20; PubMed:11459825 could not detect the interaction. Interacts with RAN. Interacts with ELK1; the interaction is direct and recruits MAD2L2 to ELK1-specific promoters. May interact with the JNK kinases MAPK8 and/or MAPK9 to stimulate ELK1 phosphorylation and transcriptional activity upon DNA damage. Interacts with TCF7L2; prevents its binding to promoters and negatively modulates its transcriptional activity. Interacts with YY1AP1. Interacts with S.flexneri protein ipaB; prevents the interaction of MAD2L2 with FZR1 and CDC20 resulting in an activation of the anaphase-promoting complex APC and a cell cycle arrest. Interacts with PRCC; the interaction is direct. Interacts with POGZ. Interacts with ASTE1. As to expression, ubiquitously expressed.

It is found in the nucleus. It localises to the cytoplasm. The protein localises to the cytoskeleton. Its subcellular location is the spindle. The protein resides in the chromosome. In terms of biological role, adapter protein able to interact with different proteins and involved in different biological processes. Mediates the interaction between the error-prone DNA polymerase zeta catalytic subunit REV3L and the inserter polymerase REV1, thereby mediating the second polymerase switching in translesion DNA synthesis. Translesion DNA synthesis releases the replication blockade of replicative polymerases, stalled in presence of DNA lesions. Component of the shieldin complex, which plays an important role in repair of DNA double-stranded breaks (DSBs). During G1 and S phase of the cell cycle, the complex functions downstream of TP53BP1 to promote non-homologous end joining (NHEJ) and suppress DNA end resection. Mediates various NHEJ-dependent processes including immunoglobulin class-switch recombination, and fusion of unprotected telomeres. May also regulate another aspect of cellular response to DNA damage through regulation of the JNK-mediated phosphorylation and activation of the transcriptional activator ELK1. Inhibits the FZR1- and probably CDC20-mediated activation of the anaphase promoting complex APC thereby regulating progression through the cell cycle. Regulates TCF7L2-mediated gene transcription and may play a role in epithelial-mesenchymal transdifferentiation. The protein is Mitotic spindle assembly checkpoint protein MAD2B (MAD2L2) of Homo sapiens (Human).